We begin with the raw amino-acid sequence, 428 residues long: Enolase (428 aa).

Residue Gln164 coordinates (2R)-2-phosphoglycerate. Glu208 acts as the Proton donor in catalysis. The Mg(2+) site is built by Asp245, Glu286, and Asp313. (2R)-2-phosphoglycerate contacts are provided by Lys338, Arg367, Ser368, and Lys389. The Proton acceptor role is filled by Lys338.

This sequence belongs to the enolase family. Requires Mg(2+) as cofactor.

Its subcellular location is the cytoplasm. The protein localises to the secreted. The protein resides in the cell surface. The enzyme catalyses (2R)-2-phosphoglycerate = phosphoenolpyruvate + H2O. Its pathway is carbohydrate degradation; glycolysis; pyruvate from D-glyceraldehyde 3-phosphate: step 4/5. Catalyzes the reversible conversion of 2-phosphoglycerate (2-PG) into phosphoenolpyruvate (PEP). It is essential for the degradation of carbohydrates via glycolysis. The chain is Enolase from Pyrococcus horikoshii (strain ATCC 700860 / DSM 12428 / JCM 9974 / NBRC 100139 / OT-3).